We begin with the raw amino-acid sequence, 78 residues long: Gas vesicle protein G (78 aa).

Belongs to the gas vesicle GvpG family.

Its subcellular location is the gas vesicle. In terms of biological role, might be a minor component of the gas vesicle involved in nucleating their formation. Gas vesicles are hollow, gas filled proteinaceous nanostructures found in some microorganisms. It is not clear what function gas vesicles perform in soil bacteria. The protein is Gas vesicle protein G of Streptomyces sp. (strain CB03234).